A 1047-amino-acid chain; its full sequence is Carbamoyl phosphate synthase arginine-specific large chain (1047 aa).

Residues 1 to 401 (MPKRTDIQSV…GLQKAVRSLE (401 aa)) are carboxyphosphate synthetic domain. Residues arginine 129, arginine 169, glycine 175, glycine 176, lysine 208, isoleucine 210, glutamate 215, glycine 241, valine 242, histidine 243, glutamine 284, and glutamate 298 each contribute to the ATP site. The ATP-grasp 1 domain maps to 133–327 (RQLMHELHEP…IARMAAKLSL (195 aa)). Residues glutamine 284, glutamate 298, and asparagine 300 each contribute to the Mg(2+) site. Residues glutamine 284, glutamate 298, and asparagine 300 each contribute to the Mn(2+) site. The interval 402-549 (IKTHGLSLPS…YSSWTGENDL (148 aa)) is oligomerization domain. The carbamoyl phosphate synthetic domain stretch occupies residues 550–933 (LLPEKAKERV…AFRKAFAWGE (384 aa)). The region spanning 676 to 865 (YEFMRSVEVP…LITYTIDVLF (190 aa)) is the ATP-grasp 2 domain. Positions 712, 750, 756, 781, 782, 783, 784, 824, and 836 each coordinate ATP. Residues glutamine 824, glutamate 836, and asparagine 838 each coordinate Mg(2+). Residues glutamine 824, glutamate 836, and asparagine 838 each coordinate Mn(2+). The allosteric domain stretch occupies residues 934 to 1047 (EQTPALFRKK…PFLLPDVVMN (114 aa)). Residues 937–1047 (PALFRKKGSV…PFLLPDVVMN (111 aa)) form the MGS-like domain.

Belongs to the CarB family. As to quaternary structure, composed of two chains; the small (or glutamine) chain promotes the hydrolysis of glutamine to ammonia, which is used by the large (or ammonia) chain to synthesize carbamoyl phosphate. Tetramer of heterodimers (alpha,beta)4. It depends on Mg(2+) as a cofactor. The cofactor is Mn(2+).

It catalyses the reaction hydrogencarbonate + L-glutamine + 2 ATP + H2O = carbamoyl phosphate + L-glutamate + 2 ADP + phosphate + 2 H(+). The enzyme catalyses hydrogencarbonate + NH4(+) + 2 ATP = carbamoyl phosphate + 2 ADP + phosphate + 2 H(+). The protein operates within amino-acid biosynthesis; L-arginine biosynthesis; carbamoyl phosphate from bicarbonate: step 1/1. Large subunit of the glutamine-dependent carbamoyl phosphate synthetase (CPSase). CPSase catalyzes the formation of carbamoyl phosphate from the ammonia moiety of glutamine, carbonate, and phosphate donated by ATP, constituting the first step of the biosynthetic pathway leading to arginine and/or urea. The large subunit (synthetase) binds the substrates ammonia (free or transferred from glutamine from the small subunit), hydrogencarbonate and ATP and carries out an ATP-coupled ligase reaction, activating hydrogencarbonate by forming carboxy phosphate which reacts with ammonia to form carbamoyl phosphate. This Halalkalibacterium halodurans (strain ATCC BAA-125 / DSM 18197 / FERM 7344 / JCM 9153 / C-125) (Bacillus halodurans) protein is Carbamoyl phosphate synthase arginine-specific large chain.